A 247-amino-acid polypeptide reads, in one-letter code: UPF0246 protein LAF_1150 (247 aa).

It belongs to the UPF0246 family.

In Limosilactobacillus fermentum (strain NBRC 3956 / LMG 18251) (Lactobacillus fermentum), this protein is UPF0246 protein LAF_1150.